The sequence spans 259 residues: Deoxyribose-phosphate aldolase (259 aa).

Aspartate 102 acts as the Proton donor/acceptor in catalysis. Lysine 167 functions as the Schiff-base intermediate with acetaldehyde in the catalytic mechanism. The active-site Proton donor/acceptor is the lysine 201.

This sequence belongs to the DeoC/FbaB aldolase family. DeoC type 2 subfamily.

It is found in the cytoplasm. It carries out the reaction 2-deoxy-D-ribose 5-phosphate = D-glyceraldehyde 3-phosphate + acetaldehyde. Its pathway is carbohydrate degradation; 2-deoxy-D-ribose 1-phosphate degradation; D-glyceraldehyde 3-phosphate and acetaldehyde from 2-deoxy-alpha-D-ribose 1-phosphate: step 2/2. Functionally, catalyzes a reversible aldol reaction between acetaldehyde and D-glyceraldehyde 3-phosphate to generate 2-deoxy-D-ribose 5-phosphate. The polypeptide is Deoxyribose-phosphate aldolase (Edwardsiella ictaluri (strain 93-146)).